Here is a 243-residue protein sequence, read N- to C-terminus: 2-C-methyl-D-erythritol 4-phosphate cytidylyltransferase (243 aa).

It belongs to the IspD/TarI cytidylyltransferase family. IspD subfamily.

The catalysed reaction is 2-C-methyl-D-erythritol 4-phosphate + CTP + H(+) = 4-CDP-2-C-methyl-D-erythritol + diphosphate. It functions in the pathway isoprenoid biosynthesis; isopentenyl diphosphate biosynthesis via DXP pathway; isopentenyl diphosphate from 1-deoxy-D-xylulose 5-phosphate: step 2/6. In terms of biological role, catalyzes the formation of 4-diphosphocytidyl-2-C-methyl-D-erythritol from CTP and 2-C-methyl-D-erythritol 4-phosphate (MEP). The protein is 2-C-methyl-D-erythritol 4-phosphate cytidylyltransferase of Chlorobium phaeovibrioides (strain DSM 265 / 1930) (Prosthecochloris vibrioformis (strain DSM 265)).